We begin with the raw amino-acid sequence, 292 residues long: ATP phosphoribosyltransferase (292 aa).

It belongs to the ATP phosphoribosyltransferase family. Long subfamily. It depends on Mg(2+) as a cofactor.

The protein localises to the cytoplasm. It carries out the reaction 1-(5-phospho-beta-D-ribosyl)-ATP + diphosphate = 5-phospho-alpha-D-ribose 1-diphosphate + ATP. Its pathway is amino-acid biosynthesis; L-histidine biosynthesis; L-histidine from 5-phospho-alpha-D-ribose 1-diphosphate: step 1/9. Feedback inhibited by histidine. In terms of biological role, catalyzes the condensation of ATP and 5-phosphoribose 1-diphosphate to form N'-(5'-phosphoribosyl)-ATP (PR-ATP). Has a crucial role in the pathway because the rate of histidine biosynthesis seems to be controlled primarily by regulation of HisG enzymatic activity. This Desulfatibacillum aliphaticivorans protein is ATP phosphoribosyltransferase.